Reading from the N-terminus, the 478-residue chain is Phosphomannomutase (478 aa).

A helical transmembrane segment spans residues 30-46 (FTPEVCARFTISFLTVM). Serine 111 acts as the Phosphoserine intermediate in catalysis. Mg(2+)-binding residues include serine 111, aspartate 245, aspartate 247, and aspartate 249. A helical transmembrane segment spans residues 265–284 (ILGLLCSLELAADAVAIPVS).

This sequence belongs to the phosphohexose mutase family. It depends on Mg(2+) as a cofactor.

It is found in the cell membrane. The catalysed reaction is alpha-D-mannose 1-phosphate = D-mannose 6-phosphate. It participates in nucleotide-sugar biosynthesis; GDP-alpha-D-mannose biosynthesis; alpha-D-mannose 1-phosphate from D-fructose 6-phosphate: step 2/2. Its pathway is bacterial outer membrane biogenesis; LPS O-antigen biosynthesis. Functionally, involved in GDP-mannose biosynthesis which serves as the activated sugar nucleotide precursor for mannose residues in cell surface polysaccharides. This enzyme participates in synthesis of the LPS group C2 O antigen. The chain is Phosphomannomutase (manB) from Salmonella muenchen.